The sequence spans 379 residues: Cytochrome b (379 aa).

The next 4 helical transmembrane spans lie at 33-53 (FGSLLGLCLISQILTGLFLAM), 77-98 (WLIRNLHANGASFFFICLYLHI), 113-133 (WNIGVVLFLLVMMTAFVGYVL), and 178-198 (FFAFHFLFPFVVAGATMLHLL). Residues His83 and His97 each contribute to the heme b site. 2 residues coordinate heme b: His182 and His196. Position 201 (His201) interacts with a ubiquinone. Helical transmembrane passes span 226 to 246 (YKDLLGFIIMLTALTMLALFY), 288 to 308 (LGGVLALLSSILVLMVVPILH), 320 to 340 (ASQLLFWILVADMLVLTWIGG), and 347 to 367 (YIIIGQVASVLYFSLFLVLNP).

It belongs to the cytochrome b family. In terms of assembly, the cytochrome bc1 complex contains 3 respiratory subunits (MT-CYB, CYC1 and UQCRFS1), 2 core proteins (UQCRC1 and UQCRC2) and probably 6 low-molecular weight proteins. Requires heme b as cofactor.

The protein localises to the mitochondrion inner membrane. In terms of biological role, component of the ubiquinol-cytochrome c reductase complex (complex III or cytochrome b-c1 complex) that is part of the mitochondrial respiratory chain. The b-c1 complex mediates electron transfer from ubiquinol to cytochrome c. Contributes to the generation of a proton gradient across the mitochondrial membrane that is then used for ATP synthesis. The chain is Cytochrome b (mt-cyb) from Anguilla anguilla (European freshwater eel).